The sequence spans 130 residues: Splicing regulatory small protein (130 aa).

A compositionally biased stretch (basic residues) spans Met-1 to Ala-10. Disordered regions lie at residues Met-1–Gly-29 and Gly-74–Arg-130. Positions Gly-16–Pro-22 are mediates interaction with SRSF3. Positions Leu-77 to Val-98 are enriched in basic and acidic residues. Polar residues predominate over residues Ser-120–Arg-130.

As to quaternary structure, interacts with SRSF3; increases SRSF3 binding to specific exons.

The protein localises to the nucleus. Interacts with the splicing factor SRSF3 and increases its binding to specific exons within pre-mRNA, thereby regulating exon-inclusion during alternative splicing. Does not directly bind pre-mRNA and could regulate a wider range of splicing factors through a similar mechanism. This chain is Splicing regulatory small protein, found in Homo sapiens (Human).